We begin with the raw amino-acid sequence, 165 residues long: Chorismate pyruvate-lyase (165 aa).

Residues methionine 35, arginine 77, leucine 115, and glutamate 156 each coordinate substrate.

Belongs to the UbiC family. As to quaternary structure, monomer.

It localises to the cytoplasm. The catalysed reaction is chorismate = 4-hydroxybenzoate + pyruvate. It participates in cofactor biosynthesis; ubiquinone biosynthesis. Removes the pyruvyl group from chorismate, with concomitant aromatization of the ring, to provide 4-hydroxybenzoate (4HB) for the ubiquinone pathway. The sequence is that of Chorismate pyruvate-lyase from Escherichia coli O157:H7.